The sequence spans 182 residues: tRNA-splicing endonuclease (182 aa).

Catalysis depends on residues Y119, H127, and K158.

The protein belongs to the tRNA-intron endonuclease family. Archaeal short subfamily. As to quaternary structure, homotetramer; although the tetramer contains four active sites, only two participate in the cleavage. Therefore, it should be considered as a dimer of dimers.

The catalysed reaction is pretRNA = a 3'-half-tRNA molecule with a 5'-OH end + a 5'-half-tRNA molecule with a 2',3'-cyclic phosphate end + an intron with a 2',3'-cyclic phosphate and a 5'-hydroxyl terminus.. Its function is as follows. Endonuclease that removes tRNA introns. Cleaves pre-tRNA at the 5'- and 3'-splice sites to release the intron. The products are an intron and two tRNA half-molecules bearing 2',3' cyclic phosphate and 5'-OH termini. Recognizes a pseudosymmetric substrate in which 2 bulged loops of 3 bases are separated by a stem of 4 bp. This is tRNA-splicing endonuclease from Saccharolobus islandicus (strain M.16.27) (Sulfolobus islandicus).